Here is a 232-residue protein sequence, read N- to C-terminus: Small ribosomal subunit protein uS3 (232 aa).

The KH type-2 domain maps to 39–107 (VRQFLTKELA…PAQINIAEVR (69 aa)).

Belongs to the universal ribosomal protein uS3 family. In terms of assembly, part of the 30S ribosomal subunit. Forms a tight complex with proteins S10 and S14.

Binds the lower part of the 30S subunit head. Binds mRNA in the 70S ribosome, positioning it for translation. This chain is Small ribosomal subunit protein uS3, found in Yersinia pestis bv. Antiqua (strain Antiqua).